The primary structure comprises 491 residues: Glutamyl-tRNA(Gln) amidotransferase subunit A (491 aa).

Active-site charge relay system residues include K76 and S154. The active-site Acyl-ester intermediate is the S178.

The protein belongs to the amidase family. GatA subfamily. In terms of assembly, heterotrimer of A, B and C subunits.

It carries out the reaction L-glutamyl-tRNA(Gln) + L-glutamine + ATP + H2O = L-glutaminyl-tRNA(Gln) + L-glutamate + ADP + phosphate + H(+). Its function is as follows. Allows the formation of correctly charged Gln-tRNA(Gln) through the transamidation of misacylated Glu-tRNA(Gln) in organisms which lack glutaminyl-tRNA synthetase. The reaction takes place in the presence of glutamine and ATP through an activated gamma-phospho-Glu-tRNA(Gln). The chain is Glutamyl-tRNA(Gln) amidotransferase subunit A from Cereibacter sphaeroides (strain ATCC 17029 / ATH 2.4.9) (Rhodobacter sphaeroides).